The sequence spans 698 residues: Elongation factor G 1 (698 aa).

A tr-type G domain is found at 8-290 (ERYRNIGIVA…AVVDFLPAPI (283 aa)). GTP contacts are provided by residues 17-24 (AHVDAGKT), 88-92 (DTPGH), and 142-145 (NKMD).

The protein belongs to the TRAFAC class translation factor GTPase superfamily. Classic translation factor GTPase family. EF-G/EF-2 subfamily.

It localises to the cytoplasm. Functionally, catalyzes the GTP-dependent ribosomal translocation step during translation elongation. During this step, the ribosome changes from the pre-translocational (PRE) to the post-translocational (POST) state as the newly formed A-site-bound peptidyl-tRNA and P-site-bound deacylated tRNA move to the P and E sites, respectively. Catalyzes the coordinated movement of the two tRNA molecules, the mRNA and conformational changes in the ribosome. The protein is Elongation factor G 1 of Shewanella frigidimarina (strain NCIMB 400).